Here is a 154-residue protein sequence, read N- to C-terminus: Hydroperoxy fatty acid reductase Gpx2 (154 aa).

Cys34 is a catalytic residue.

This sequence belongs to the glutathione peroxidase family. Monomer.

It catalyses the reaction a hydroperoxy polyunsaturated fatty acid + NADPH + H(+) = a hydroxy polyunsaturated fatty acid + NADP(+) + H2O. Mercaptosuccinate, pCMB, and nethylmaleimide act as inhibitors of the catalytic activity. Its function is as follows. Hydroperoxy fatty acid reductase essential for the removal of lipid hydroperoxides under normal and stress conditions, leading to the protection of membrane integrity. This chain is Hydroperoxy fatty acid reductase Gpx2 (gpx2), found in Synechocystis sp. (strain ATCC 27184 / PCC 6803 / Kazusa).